Here is a 1004-residue protein sequence, read N- to C-terminus: Retrovirus-related Pol polyprotein from type-1 retrotransposable element R1 (1004 aa).

A Reverse transcriptase domain is found at 450–717 (QCLLESYFPQ…SEVKHLGIFV (268 aa)). The segment at 853-1004 (LSGSQFKELL…RLMRGMRIRE (152 aa)) is nucleic acid-binding endonuclease.

The enzyme catalyses DNA(n) + a 2'-deoxyribonucleoside 5'-triphosphate = DNA(n+1) + diphosphate. This is Retrovirus-related Pol polyprotein from type-1 retrotransposable element R1 from Bradysia coprophila (Dark-winged fungus gnat).